We begin with the raw amino-acid sequence, 224 residues long: Uracil-DNA glycosylase (224 aa).

The active-site Proton acceptor is the Asp62.

It belongs to the uracil-DNA glycosylase (UDG) superfamily. UNG family.

Its subcellular location is the cytoplasm. It catalyses the reaction Hydrolyzes single-stranded DNA or mismatched double-stranded DNA and polynucleotides, releasing free uracil.. In terms of biological role, excises uracil residues from the DNA which can arise as a result of misincorporation of dUMP residues by DNA polymerase or due to deamination of cytosine. The sequence is that of Uracil-DNA glycosylase from Aliivibrio fischeri (strain ATCC 700601 / ES114) (Vibrio fischeri).